Consider the following 200-residue polypeptide: Diadenylate cyclase (200 aa).

A helical transmembrane segment spans residues 5 to 25; that stretch reads ILLFITLIFLLLLFVFLIAFA. In terms of domain architecture, DAC spans 28-185; it reads NKRVRNYVVR…KGVIKTLSSN (158 aa).

This sequence belongs to the adenylate cyclase family. DacB/CdaS subfamily. Probably oligomerizes.

It localises to the cell membrane. It catalyses the reaction 2 ATP = 3',3'-c-di-AMP + 2 diphosphate. In terms of biological role, catalyzes the condensation of 2 ATP molecules into cyclic di-AMP (c-di-AMP), a second messenger used to regulate differing processes in different bacteria. The chain is Diadenylate cyclase from Mycoplasma genitalium (strain ATCC 33530 / DSM 19775 / NCTC 10195 / G37) (Mycoplasmoides genitalium).